Consider the following 338-residue polypeptide: Anthranilate phosphoribosyltransferase (338 aa).

5-phospho-alpha-D-ribose 1-diphosphate-binding positions include Gly81, 84–85 (GD), Ser89, 91–94 (NVST), 109–117 (KHGNRALSS), and Ala121. An anthranilate-binding site is contributed by Gly81. Position 93 (Ser93) interacts with Mg(2+). Asn112 is a binding site for anthranilate. Residue Arg167 participates in anthranilate binding. Asp226 and Glu227 together coordinate Mg(2+).

It belongs to the anthranilate phosphoribosyltransferase family. In terms of assembly, homodimer. Mg(2+) is required as a cofactor.

The catalysed reaction is N-(5-phospho-beta-D-ribosyl)anthranilate + diphosphate = 5-phospho-alpha-D-ribose 1-diphosphate + anthranilate. It participates in amino-acid biosynthesis; L-tryptophan biosynthesis; L-tryptophan from chorismate: step 2/5. Functionally, catalyzes the transfer of the phosphoribosyl group of 5-phosphorylribose-1-pyrophosphate (PRPP) to anthranilate to yield N-(5'-phosphoribosyl)-anthranilate (PRA). The polypeptide is Anthranilate phosphoribosyltransferase (Rhodopseudomonas palustris (strain HaA2)).